The chain runs to 946 residues: Leucine--tRNA ligase (946 aa).

The 'HIGH' region signature appears at 40-51 (PYPSGAGLHVGH). The 'KMSKS' region motif lies at 719 to 723 (KMSKS). Residue lysine 722 coordinates ATP.

This sequence belongs to the class-I aminoacyl-tRNA synthetase family.

It localises to the cytoplasm. It carries out the reaction tRNA(Leu) + L-leucine + ATP = L-leucyl-tRNA(Leu) + AMP + diphosphate. This Parabacteroides distasonis (strain ATCC 8503 / DSM 20701 / CIP 104284 / JCM 5825 / NCTC 11152) protein is Leucine--tRNA ligase.